The sequence spans 598 residues: Sulfoacetaldehyde acetyltransferase (598 aa).

The protein belongs to the TPP enzyme family. In terms of assembly, homotetramer. It depends on Mg(2+) as a cofactor. The cofactor is thiamine diphosphate.

It localises to the cytoplasm. The enzyme catalyses acetyl phosphate + sulfite + H(+) = sulfoacetaldehyde + phosphate. It participates in organosulfur degradation; taurine degradation via aerobic pathway; acetyl phosphate and sulfite from taurine: step 2/2. The sequence is that of Sulfoacetaldehyde acetyltransferase from Castellaniella defragrans (Alcaligenes defragrans).